The sequence spans 422 residues: Phospho-N-acetylmuramoyl-pentapeptide-transferase (422 aa).

A run of 9 helical transmembrane segments spans residues 28 to 48, 71 to 91, 95 to 115, 136 to 156, 211 to 231, 246 to 266, 279 to 299, 313 to 333, and 399 to 419; these read LMAI…FINL, VGVP…PCLL, LHNI…SLGF, IIGQ…SPDV, AGWI…SNGA, AIIG…EFAG, LVIF…YNAY, IGGI…IPIL, and KITV…IITL.

It belongs to the glycosyltransferase 4 family. MraY subfamily. Mg(2+) is required as a cofactor.

Its subcellular location is the cell inner membrane. It catalyses the reaction UDP-N-acetyl-alpha-D-muramoyl-L-alanyl-gamma-D-glutamyl-meso-2,6-diaminopimeloyl-D-alanyl-D-alanine + di-trans,octa-cis-undecaprenyl phosphate = di-trans,octa-cis-undecaprenyl diphospho-N-acetyl-alpha-D-muramoyl-L-alanyl-D-glutamyl-meso-2,6-diaminopimeloyl-D-alanyl-D-alanine + UMP. The protein operates within cell wall biogenesis; peptidoglycan biosynthesis. Its function is as follows. Catalyzes the initial step of the lipid cycle reactions in the biosynthesis of the cell wall peptidoglycan: transfers peptidoglycan precursor phospho-MurNAc-pentapeptide from UDP-MurNAc-pentapeptide onto the lipid carrier undecaprenyl phosphate, yielding undecaprenyl-pyrophosphoryl-MurNAc-pentapeptide, known as lipid I. The protein is Phospho-N-acetylmuramoyl-pentapeptide-transferase of Bacteroides fragilis (strain ATCC 25285 / DSM 2151 / CCUG 4856 / JCM 11019 / LMG 10263 / NCTC 9343 / Onslow / VPI 2553 / EN-2).